The sequence spans 156 residues: Small ribosomal subunit protein uS7 (156 aa).

This sequence belongs to the universal ribosomal protein uS7 family. As to quaternary structure, part of the 30S ribosomal subunit. Contacts proteins S9 and S11.

Its function is as follows. One of the primary rRNA binding proteins, it binds directly to 16S rRNA where it nucleates assembly of the head domain of the 30S subunit. Is located at the subunit interface close to the decoding center, probably blocks exit of the E-site tRNA. In Geotalea uraniireducens (strain Rf4) (Geobacter uraniireducens), this protein is Small ribosomal subunit protein uS7.